Reading from the N-terminus, the 181-residue chain is Heavy metal-associated isoprenylated plant protein 46 (181 aa).

In terms of domain architecture, HMA spans 2-71; sequence KQKILIRVTM…KVAFAELVSV (70 aa). Residues 74–121 are disordered; the sequence is VEPPKKEDEKKGGDGKGAEGKGGDQKGGDKKGPDDKEPPEPKPVPCYP. A compositionally biased stretch (basic and acidic residues) spans 75 to 113; sequence EPPKKEDEKKGGDGKGAEGKGGDQKGGDKKGPDDKEPPE. Cys-178 carries the cysteine methyl ester modification. Cys-178 is lipidated: S-farnesyl cysteine. A propeptide spans 179 to 181 (removed in mature form); that stretch reads KIM.

The protein belongs to the HIPP family.

Probable heavy-metal-binding protein. In Arabidopsis thaliana (Mouse-ear cress), this protein is Heavy metal-associated isoprenylated plant protein 46.